A 70-amino-acid polypeptide reads, in one-letter code: NADH-ubiquinone oxidoreductase chain 3 (70 aa).

Residues 42-62 form a helical membrane-spanning segment; it reads FFVITLIFLIFDVEIYLLLPM.

The protein belongs to the complex I subunit 3 family.

The protein localises to the mitochondrion membrane. The catalysed reaction is a ubiquinone + NADH + 5 H(+)(in) = a ubiquinol + NAD(+) + 4 H(+)(out). Functionally, core subunit of the mitochondrial membrane respiratory chain NADH dehydrogenase (Complex I) that is believed to belong to the minimal assembly required for catalysis. Complex I functions in the transfer of electrons from NADH to the respiratory chain. The immediate electron acceptor for the enzyme is believed to be ubiquinone. This Artemia salina (Brine shrimp) protein is NADH-ubiquinone oxidoreductase chain 3 (ND3).